A 155-amino-acid chain; its full sequence is Small ribosomal subunit protein uS7c (155 aa).

The protein belongs to the universal ribosomal protein uS7 family. In terms of assembly, part of the 30S ribosomal subunit.

It is found in the plastid. The protein resides in the chloroplast. Its function is as follows. One of the primary rRNA binding proteins, it binds directly to 16S rRNA where it nucleates assembly of the head domain of the 30S subunit. This is Small ribosomal subunit protein uS7c (rps7) from Lactoris fernandeziana.